Consider the following 563-residue polypeptide: Membrane protein insertase YidC (563 aa).

A helical membrane pass occupies residues 6 to 26; sequence TVLWMIFSFSLLLLWNNWQIH. The segment at 36–70 is disordered; sequence PAPEAAATQQPKADANGTAASSTASIPSSPAAAPA. Low complexity predominate over residues 54-70; it reads AASSTASIPSSPAAAPA. Helical transmembrane passes span 373 to 393, 443 to 463, 482 to 502, and 512 to 532; these read WGWTIVALTVIIKAVFFPLAA, LPMVVQIPVFIALYWVLLASV, PFFILPAIMMATMFLQIKLNP, and VMMIMPLVFGGMMFFFPAGLV.

It belongs to the OXA1/ALB3/YidC family. Type 1 subfamily. In terms of assembly, interacts with the Sec translocase complex via SecD. Specifically interacts with transmembrane segments of nascent integral membrane proteins during membrane integration.

Its subcellular location is the cell membrane. In terms of biological role, required for the insertion and/or proper folding and/or complex formation of integral membrane proteins into the membrane. Involved in integration of membrane proteins that insert both dependently and independently of the Sec translocase complex, as well as at least some lipoproteins. Aids folding of multispanning membrane proteins. This Bordetella bronchiseptica (strain ATCC BAA-588 / NCTC 13252 / RB50) (Alcaligenes bronchisepticus) protein is Membrane protein insertase YidC.